A 554-amino-acid polypeptide reads, in one-letter code: Heterochromatin protein 1-binding protein 3 (554 aa).

Ala-2 carries the post-translational modification N-acetylalanine. Ser-6 carries the post-translational modification Phosphoserine. Disordered regions lie at residues 30-136 (LGEK…KTIP) and 142-161 (SASQ…SPRP). Thr-51 is subject to Phosphothreonine. The span at 60–71 (GEEEKPEPDGSS) shows a compositional bias: acidic residues. A Glycyl lysine isopeptide (Lys-Gly) (interchain with G-Cter in SUMO2) cross-link involves residue Lys-64. A phosphothreonine mark is found at Glu-72 and Thr-85. The span at 72-93 (EESISTVEEQENETPPATSSEA) shows a compositional bias: polar residues. Basic and acidic residues predominate over residues 94–129 (EQPKGEPESGEKEENNNKSAEEPKKDEKDQSKEKEK). A Glycyl lysine isopeptide (Lys-Gly) (interchain with G-Cter in SUMO2) cross-link involves residue Lys-97. The segment covering 142 to 156 (SASQLARAQRQTPMA) has biased composition (polar residues). Ser-144, Ser-157, and Ser-158 each carry phosphoserine. The H15 1 domain occupies 159 to 234 (PRPKMDAILT…GASGSFVVVQ (76 aa)). The residue at position 192 (Lys-192) is an N6-acetyllysine. The tract at residues 229 to 254 (SFVVVQKSKPPQKSKNRKKGSALDPE) is disordered. The segment covering 238-248 (PPQKSKNRKKG) has biased composition (basic residues). At Ser-249 the chain carries Phosphoserine. The PxVxL motif motif lies at 255–259 (PQVKL). H15 domains are found at residues 255-330 (PQVK…QLKK) and 337-413 (LGGS…QLSF). Residue Lys-258 forms a Glycyl lysine isopeptide (Lys-Gly) (interchain with G-Cter in SUMO2) linkage. Positions 420–554 (GVLFPKKESG…AMKKSFKTKK (135 aa)) are disordered. A compositionally biased stretch (acidic residues) spans 430-451 (GSDDEDEDDDDDESSEDSEDEE). Residues Ser-443, Ser-444, and Ser-447 each carry the phosphoserine modification. Polar residues predominate over residues 464 to 475 (AKSQGKTASMKQ). Composition is skewed to basic residues over residues 490-511 (GKVR…RKAR) and 544-554 (SAMKKSFKTKK).

Interacts (via PxVxL motif) with CBX5 (via Trp-174).

The protein resides in the nucleus. The protein localises to the chromosome. In terms of biological role, component of heterochromatin that maintains heterochromatin integrity during G1/S progression and regulates the duration of G1 phase to critically influence cell proliferative capacity. May play a role in hypoxia-induced oncogenesis. The protein is Heterochromatin protein 1-binding protein 3 (Hp1bp3) of Mus musculus (Mouse).